We begin with the raw amino-acid sequence, 185 residues long: MDIDPYKEFGATVELLSFLPSDFFPSVRDLLDTASALYREALESPEHCSPHHTALRETILCWGELMTLATWVGNNLEDPASRDLVVNYVNTNMGLKIRQLLWFHISCLTFGRETVLEYLVSFGVWIRTPPAYRPPNAPILSTLPETTVVRRRDRGRSPRRRTPSPRRRRSQSPRRRRSQSRESQC.

The interval 136–185 is disordered; the sequence is NAPILSTLPETTVVRRRDRGRSPRRRTPSPRRRRSQSPRRRRSQSRESQC. The span at 149–178 shows a compositional bias: basic residues; it reads VRRRDRGRSPRRRTPSPRRRRSQSPRRRRS. Phosphoserine; by host is present on residues S157, S164, and S172. One copy of the 1; half-length repeat lies at 157–163; that stretch reads SPRRRTP. A 3 X 8 AA repeats of S-P-R-R-R-[PR]-S-Q region spans residues 157 to 179; it reads SPRRRTPSPRRRRSQSPRRRRSQ. Residues 160-177 carry the Bipartite nuclear localization signal motif; the sequence is RRTPSPRRRRSQSPRRRR. Repeat copies occupy residues 164–171 and 172–179. Residues 179-185 form an RNA binding region; that stretch reads QSRESQC.

This sequence belongs to the orthohepadnavirus core antigen family. As to quaternary structure, homodimerizes, then multimerizes. Interacts with cytosol exposed regions of viral L glycoprotein present in the reticulum-to-Golgi compartment. Interacts with human FLNB. Phosphorylated form interacts with host importin alpha; this interaction depends on the exposure of the NLS, which itself depends upon genome maturation and/or phosphorylation of the capsid protein. Interacts with host NUP153. Post-translationally, phosphorylated by host SRPK1, SRPK2, and maybe protein kinase C or GAPDH. Phosphorylation is critical for pregenomic RNA packaging. Protein kinase C phosphorylation is stimulated by HBx protein and may play a role in transport of the viral genome to the nucleus at the late step during the viral replication cycle.

It localises to the virion. The protein localises to the host cytoplasm. Self assembles to form an icosahedral capsid. Most capsids appear to be large particles with an icosahedral symmetry of T=4 and consist of 240 copies of capsid protein, though a fraction forms smaller T=3 particles consisting of 180 capsid proteins. Entering capsids are transported along microtubules to the nucleus. Phosphorylation of the capsid is thought to induce exposure of nuclear localization signal in the C-terminal portion of the capsid protein that allows binding to the nuclear pore complex via the importin (karyopherin-) alpha and beta. Capsids are imported in intact form through the nuclear pore into the nuclear basket, where it probably binds NUP153. Only capsids that contain the mature viral genome can release the viral DNA and capsid protein into the nucleoplasm. Immature capsids get stuck in the basket. Capsids encapsulate the pre-genomic RNA and the P protein. Pre-genomic RNA is reverse-transcribed into DNA while the capsid is still in the cytoplasm. The capsid can then either be directed to the nucleus, providing more genomes for transcription, or bud through the endoplasmic reticulum to provide new virions. This Homo sapiens (Human) protein is Capsid protein.